We begin with the raw amino-acid sequence, 182 residues long: tRNA-splicing endonuclease (182 aa).

Active-site residues include Tyr119, His127, and Lys158.

Belongs to the tRNA-intron endonuclease family. Archaeal short subfamily. In terms of assembly, homotetramer; although the tetramer contains four active sites, only two participate in the cleavage. Therefore, it should be considered as a dimer of dimers.

It catalyses the reaction pretRNA = a 3'-half-tRNA molecule with a 5'-OH end + a 5'-half-tRNA molecule with a 2',3'-cyclic phosphate end + an intron with a 2',3'-cyclic phosphate and a 5'-hydroxyl terminus.. In terms of biological role, endonuclease that removes tRNA introns. Cleaves pre-tRNA at the 5'- and 3'-splice sites to release the intron. The products are an intron and two tRNA half-molecules bearing 2',3' cyclic phosphate and 5'-OH termini. Recognizes a pseudosymmetric substrate in which 2 bulged loops of 3 bases are separated by a stem of 4 bp. The polypeptide is tRNA-splicing endonuclease (Saccharolobus islandicus (strain L.S.2.15 / Lassen #1) (Sulfolobus islandicus)).